Here is a 502-residue protein sequence, read N- to C-terminus: Glucose-6-phosphate isomerase (502 aa).

Glu331 functions as the Proton donor in the catalytic mechanism. Active-site residues include His362 and Lys471.

The protein belongs to the GPI family.

It localises to the cytoplasm. It carries out the reaction alpha-D-glucose 6-phosphate = beta-D-fructose 6-phosphate. The protein operates within carbohydrate biosynthesis; gluconeogenesis. It functions in the pathway carbohydrate degradation; glycolysis; D-glyceraldehyde 3-phosphate and glycerone phosphate from D-glucose: step 2/4. Functionally, catalyzes the reversible isomerization of glucose-6-phosphate to fructose-6-phosphate. This chain is Glucose-6-phosphate isomerase, found in Xylella fastidiosa (strain M12).